Here is a 437-residue protein sequence, read N- to C-terminus: Epsilon-sarcoglycan (437 aa).

Residues 1–317 are Extracellular-facing; the sequence is MQLPWWWELG…LKSRDYYTDF (317 aa). Asn-200 carries N-linked (GlcNAc...) asparagine glycosylation. A helical membrane pass occupies residues 318-338; the sequence is LVTLAVPSAVALVLFLILAYI. The Cytoplasmic segment spans residues 339-437; the sequence is MCCRREGVEK…QQQTTGKWYS (99 aa). Residues 418–437 are disordered; that stretch reads QNLPHQTQIPQQQTTGKWYS.

It belongs to the sarcoglycan alpha/epsilon family. Post-translationally, N-glycosylated. Ubiquitinated, leading to its degradation by the proteasome.

Its subcellular location is the cell membrane. The protein resides in the sarcolemma. It localises to the cytoplasm. It is found in the cytoskeleton. The protein localises to the cell projection. Its subcellular location is the dendrite. The protein resides in the golgi apparatus. In terms of biological role, component of the sarcoglycan complex, a subcomplex of the dystrophin-glycoprotein complex which forms a link between the F-actin cytoskeleton and the extracellular matrix. In Bos taurus (Bovine), this protein is Epsilon-sarcoglycan (SGCE).